We begin with the raw amino-acid sequence, 467 residues long: Probable apyrase 2 (467 aa).

At 1 to 25 the chain is on the cytoplasmic side; that stretch reads MRRYSALPGGGARPDTLADRLHRYR. A helical; Signal-anchor for type II membrane protein transmembrane segment spans residues 26–46; it reads GVLLVILAPLALVSLVLLLMP. Residues 47-467 lie on the Extracellular side of the membrane; the sequence is RSPASSSAAA…PLGSAIEVAS (421 aa). Position 70–80 (70–80) interacts with ATP; sequence VIFDAGSSGSR. Glutamate 192 serves as the catalytic Proton acceptor. ATP is bound at residue 216 to 226; sequence GVVDLGGGSVQ.

Belongs to the GDA1/CD39 NTPase family. Requires Ca(2+) as cofactor.

The protein resides in the membrane. It catalyses the reaction a ribonucleoside 5'-triphosphate + 2 H2O = a ribonucleoside 5'-phosphate + 2 phosphate + 2 H(+). Catalyzes the hydrolysis of phosphoanhydride bonds of nucleoside tri- and di-phosphates. The sequence is that of Probable apyrase 2 (APY2) from Oryza sativa subsp. japonica (Rice).